A 206-amino-acid chain; its full sequence is Small ribosomal subunit protein uS4 (206 aa).

Residues 29–52 (LDKRPYAPGQHGQRRGRGRPSDYS) form a disordered region. Positions 96 to 171 (RRLDNVVFRM…QKRRRVSPWV (76 aa)) constitute an S4 RNA-binding domain.

It belongs to the universal ribosomal protein uS4 family. As to quaternary structure, part of the 30S ribosomal subunit. Contacts protein S5. The interaction surface between S4 and S5 is involved in control of translational fidelity.

Its function is as follows. One of the primary rRNA binding proteins, it binds directly to 16S rRNA where it nucleates assembly of the body of the 30S subunit. Functionally, with S5 and S12 plays an important role in translational accuracy. This Deinococcus deserti (strain DSM 17065 / CIP 109153 / LMG 22923 / VCD115) protein is Small ribosomal subunit protein uS4.